We begin with the raw amino-acid sequence, 348 residues long: Phenylalanine--tRNA ligase alpha subunit (348 aa).

Position 259 (Glu259) interacts with Mg(2+).

Belongs to the class-II aminoacyl-tRNA synthetase family. Phe-tRNA synthetase alpha subunit type 1 subfamily. Tetramer of two alpha and two beta subunits. Mg(2+) is required as a cofactor.

It localises to the cytoplasm. It catalyses the reaction tRNA(Phe) + L-phenylalanine + ATP = L-phenylalanyl-tRNA(Phe) + AMP + diphosphate + H(+). This is Phenylalanine--tRNA ligase alpha subunit from Levilactobacillus brevis (strain ATCC 367 / BCRC 12310 / CIP 105137 / JCM 1170 / LMG 11437 / NCIMB 947 / NCTC 947) (Lactobacillus brevis).